Consider the following 780-residue polypeptide: ATP-dependent 6-phosphofructokinase, muscle type (780 aa).

At threonine 2 the chain carries N-acetylthreonine. Positions 2 to 390 are N-terminal catalytic PFK domain 1; the sequence is THEEHHAAKS…NWEVYKLLAH (389 aa). ATP contacts are provided by residues glycine 25, 88 to 89, and 118 to 121; these read RC and GDGS. Aspartate 119 serves as a coordination point for Mg(2+). Substrate-binding positions include 164 to 166, arginine 201, 208 to 210, glutamate 264, arginine 292, and 298 to 301; these read SID, MGR, and HVQR. Aspartate 166 serves as the catalytic Proton acceptor. At serine 377 the chain carries Phosphoserine. The interdomain linker stretch occupies residues 391-401; the sequence is VRPPVTKSGSY. Residues 402 to 780 form a C-terminal regulatory PFK domain 2 region; sequence TVAVMNVGAP…TRKRSGEATI (379 aa). Beta-D-fructose 2,6-bisphosphate is bound by residues arginine 471 and 528–532; that span reads TVSNN. Serine 530 carries an O-linked (GlcNAc) serine glycan. At lysine 557 the chain carries N6-(2-hydroxyisobutyryl)lysine. Residues arginine 566, 573 to 575, glutamate 629, arginine 655, and 661 to 664 contribute to the beta-D-fructose 2,6-bisphosphate site; these read MGG and HMQQ. Phosphoserine is present on serine 667. Arginine 735 serves as a coordination point for beta-D-fructose 2,6-bisphosphate. Position 775 is a phosphoserine (serine 775).

This sequence belongs to the phosphofructokinase type A (PFKA) family. ATP-dependent PFK group I subfamily. Eukaryotic two domain clade 'E' sub-subfamily. Homo- and heterotetramers. Phosphofructokinase (PFK) enzyme functions as a tetramer composed of different combinations of 3 types of subunits, called PFKM (M), PFKL (L) and PFKP (P). The composition of the PFK tetramer differs according to the tissue type it is present in. The kinetic and regulatory properties of the tetrameric enzyme are dependent on the subunit composition, hence can vary across tissues. Interacts (via C-terminus) with HK1 (via N-terminal spermatogenic cell-specific region). It depends on Mg(2+) as a cofactor. Post-translationally, glcNAcylation decreases enzyme activity.

Its subcellular location is the cytoplasm. It carries out the reaction beta-D-fructose 6-phosphate + ATP = beta-D-fructose 1,6-bisphosphate + ADP + H(+). The protein operates within carbohydrate degradation; glycolysis; D-glyceraldehyde 3-phosphate and glycerone phosphate from D-glucose: step 3/4. Allosterically activated by ADP, AMP, or fructose 2,6-bisphosphate, and allosterically inhibited by ATP or citrate. Catalyzes the phosphorylation of D-fructose 6-phosphate to fructose 1,6-bisphosphate by ATP, the first committing step of glycolysis. The sequence is that of ATP-dependent 6-phosphofructokinase, muscle type (PFKM) from Sus scrofa (Pig).